A 156-amino-acid chain; its full sequence is C-type lectin lectoxin-Phi2 (156 aa).

The N-terminal stretch at 1–23 (MGRFIFVSLGLLVLAFSLSGIGA) is a signal peptide. 3 disulfide bridges follow: Cys27–Cys38, Cys55–Cys154, and Cys129–Cys146. Residues 34–155 (HNVSCYKLIN…CNRRHRFLCK (122 aa)) form the C-type lectin domain. 2 N-linked (GlcNAc...) asparagine glycosylation sites follow: Asn35 and Asn109. The Mannose-binding signature appears at 119-121 (EPN). Ca(2+)-binding residues include Glu127, Asn142, and Asp143.

The protein belongs to the true venom lectin family. In terms of tissue distribution, expressed by the venom gland.

The protein resides in the secreted. Its function is as follows. Mannose-binding lectin which recognizes specific carbohydrate structures and agglutinates a variety of animal cells by binding to cell-surface glycoproteins and glycolipids. May be a calcium-dependent lectin. The polypeptide is C-type lectin lectoxin-Phi2 (Philodryas olfersii (Green snake)).